Here is a 472-residue protein sequence, read N- to C-terminus: Glutamate--tRNA ligase 2 (472 aa).

Residues 10–20 (PSPTGYLHIGG) carry the 'HIGH' region motif. Residues C99, C101, C126, and D128 each coordinate Zn(2+). Positions 112 to 130 (EQQARKEKPRYDGRCRDLD) are enriched in basic and acidic residues. A disordered region spans residues 112 to 137 (EQQARKEKPRYDGRCRDLDGPPSEEV). The 'KMSKS' region signature appears at 240–244 (RLSKR). Residue K243 participates in ATP binding.

It belongs to the class-I aminoacyl-tRNA synthetase family. Glutamate--tRNA ligase type 1 subfamily. In terms of assembly, monomer. The cofactor is Zn(2+).

It localises to the cytoplasm. It catalyses the reaction tRNA(Glu) + L-glutamate + ATP = L-glutamyl-tRNA(Glu) + AMP + diphosphate. Its function is as follows. Catalyzes the attachment of glutamate to tRNA(Glu) in a two-step reaction: glutamate is first activated by ATP to form Glu-AMP and then transferred to the acceptor end of tRNA(Glu). The polypeptide is Glutamate--tRNA ligase 2 (Halorhodospira halophila (strain DSM 244 / SL1) (Ectothiorhodospira halophila (strain DSM 244 / SL1))).